The following is an 84-amino-acid chain: N.vectensis toxin 5 (84 aa).

The first 21 residues, 1-21 (MNSLLKVAVVCLVMLVACSSG), serve as a signal peptide directing secretion. 3 disulfide bridges follow: C45–C77, C47–C68, and C61–C78.

Expressed in ectodermal gland cells. In adult female tissues, highly transcribed in mesenteries (gametes-producing tissue) and slightly transcribed in tentacles, pharynx and physa.

Has toxic effects on zebrafish larvae. It causes contractile paralysis and twitching of the tail within 20 minutes, followed by death within 30 minutes. Does not show any toxicity when injected into arthropods (cherry shrimps or grass shrimps). The chain is N.vectensis toxin 5 from Nematostella vectensis (Starlet sea anemone).